The following is a 283-amino-acid chain: Bifunctional protein FolD (283 aa).

NADP(+) is bound by residues 164-166 (GSS), Ile-189, and Ile-230.

Belongs to the tetrahydrofolate dehydrogenase/cyclohydrolase family. In terms of assembly, homodimer.

The enzyme catalyses (6R)-5,10-methylene-5,6,7,8-tetrahydrofolate + NADP(+) = (6R)-5,10-methenyltetrahydrofolate + NADPH. It catalyses the reaction (6R)-5,10-methenyltetrahydrofolate + H2O = (6R)-10-formyltetrahydrofolate + H(+). It functions in the pathway one-carbon metabolism; tetrahydrofolate interconversion. In terms of biological role, catalyzes the oxidation of 5,10-methylenetetrahydrofolate to 5,10-methenyltetrahydrofolate and then the hydrolysis of 5,10-methenyltetrahydrofolate to 10-formyltetrahydrofolate. In Fusobacterium nucleatum subsp. nucleatum (strain ATCC 25586 / DSM 15643 / BCRC 10681 / CIP 101130 / JCM 8532 / KCTC 2640 / LMG 13131 / VPI 4355), this protein is Bifunctional protein FolD.